Here is a 1111-residue protein sequence, read N- to C-terminus: Protein STU1 (1111 aa).

2 HEAT repeats span residues 95–133 (ALPL…ERSV) and 167–205 (YVPT…KSDL). 2 disordered regions span residues 225 to 245 (ELNP…VEPS) and 476 to 751 (RLLQ…VDEE). A compositionally biased stretch (polar residues) spans 502 to 511 (SKSTMGTSKP). Residues 704–714 (PREEQRFVKPV) show a composition bias toward basic and acidic residues.

It belongs to the CLASP family. As to quaternary structure, interacts with microtubules.

It is found in the cytoplasm. The protein localises to the cytoskeleton. It localises to the nucleus. Its subcellular location is the spindle. Its function is as follows. Microtubule binding protein that promotes the stabilization of dynamic microtubules. Required for mitotic spindle formation. This chain is Protein STU1 (STU1), found in Chaetomium globosum (strain ATCC 6205 / CBS 148.51 / DSM 1962 / NBRC 6347 / NRRL 1970) (Soil fungus).